Reading from the N-terminus, the 88-residue chain is DNA-directed RNA polymerase subunit omega (88 aa).

Belongs to the RNA polymerase subunit omega family. In terms of assembly, the RNAP catalytic core consists of 2 alpha, 1 beta, 1 beta' and 1 omega subunit. When a sigma factor is associated with the core the holoenzyme is formed, which can initiate transcription.

The catalysed reaction is RNA(n) + a ribonucleoside 5'-triphosphate = RNA(n+1) + diphosphate. Promotes RNA polymerase assembly. Latches the N- and C-terminal regions of the beta' subunit thereby facilitating its interaction with the beta and alpha subunits. The sequence is that of DNA-directed RNA polymerase subunit omega from Anaeromyxobacter sp. (strain Fw109-5).